We begin with the raw amino-acid sequence, 152 residues long: Methylglyoxal synthase (152 aa).

Residues 1 to 152 enclose the MGS-like domain; sequence MELTTRTIAA…YDRYLQQRLK (152 aa). Residues His-19, Lys-23, 45–48, and 65–66 contribute to the substrate site; these read TGTT and SG. The active-site Proton donor/acceptor is the Asp-71. His-98 is a substrate binding site.

Belongs to the methylglyoxal synthase family.

It carries out the reaction dihydroxyacetone phosphate = methylglyoxal + phosphate. In terms of biological role, catalyzes the formation of methylglyoxal from dihydroxyacetone phosphate. The sequence is that of Methylglyoxal synthase from Yersinia enterocolitica serotype O:8 / biotype 1B (strain NCTC 13174 / 8081).